Reading from the N-terminus, the 429-residue chain is UDP-N-acetylglucosamine 1-carboxyvinyltransferase (429 aa).

A phosphoenolpyruvate-binding site is contributed by 22-23; it reads KN. Arginine 96 lines the UDP-N-acetyl-alpha-D-glucosamine pocket. The active-site Proton donor is cysteine 120. Cysteine 120 bears the 2-(S-cysteinyl)pyruvic acid O-phosphothioketal mark. UDP-N-acetyl-alpha-D-glucosamine is bound by residues 125-129, aspartate 310, and isoleucine 332; that span reads RPVDL.

It belongs to the EPSP synthase family. MurA subfamily.

It localises to the cytoplasm. It catalyses the reaction phosphoenolpyruvate + UDP-N-acetyl-alpha-D-glucosamine = UDP-N-acetyl-3-O-(1-carboxyvinyl)-alpha-D-glucosamine + phosphate. It functions in the pathway cell wall biogenesis; peptidoglycan biosynthesis. Its function is as follows. Cell wall formation. Adds enolpyruvyl to UDP-N-acetylglucosamine. The protein is UDP-N-acetylglucosamine 1-carboxyvinyltransferase of Caulobacter vibrioides (strain ATCC 19089 / CIP 103742 / CB 15) (Caulobacter crescentus).